The primary structure comprises 278 residues: UPF0761 membrane protein NT05HA_1801 (278 aa).

The next 6 membrane-spanning stretches (helical) occupy residues 32–52 (MLAIVPLIMVVFSIFSAFPVF), 88–108 (QMSAVGIISLIVVALMLINSI), 123–143 (PIFTSFAIYWLILTLGPLLVG), 168–188 (LLSFVPFLSTWFIFTVIYMVV), 203–223 (LIAAVFFTLGKQAFAWYIVTF), and 232–252 (AMATLPIMLLWIQLSWTFVLL).

The protein belongs to the UPF0761 family.

It is found in the cell inner membrane. In Aggregatibacter aphrophilus (strain NJ8700) (Haemophilus aphrophilus), this protein is UPF0761 membrane protein NT05HA_1801.